The primary structure comprises 268 residues: Octanoyltransferase (268 aa).

Positions 47 to 243 constitute a BPL/LPL catalytic domain; it reads PETPDQVWLV…ALCEVLAAHE (197 aa). Residues 87 to 94, 159 to 161, and 172 to 174 contribute to the substrate site; these read RGGQITYH, ALG, and GVS. Cys190 acts as the Acyl-thioester intermediate in catalysis.

It belongs to the LipB family.

It is found in the cytoplasm. The enzyme catalyses octanoyl-[ACP] + L-lysyl-[protein] = N(6)-octanoyl-L-lysyl-[protein] + holo-[ACP] + H(+). It participates in protein modification; protein lipoylation via endogenous pathway; protein N(6)-(lipoyl)lysine from octanoyl-[acyl-carrier-protein]: step 1/2. Functionally, catalyzes the transfer of endogenously produced octanoic acid from octanoyl-acyl-carrier-protein onto the lipoyl domains of lipoate-dependent enzymes. Lipoyl-ACP can also act as a substrate although octanoyl-ACP is likely to be the physiological substrate. This is Octanoyltransferase from Cupriavidus necator (strain ATCC 17699 / DSM 428 / KCTC 22496 / NCIMB 10442 / H16 / Stanier 337) (Ralstonia eutropha).